The sequence spans 265 residues: Protein N-terminal and lysine N-methyltransferase EFM7 (265 aa).

S-adenosyl-L-methionine-binding positions include tryptophan 55, glycine 81–alanine 83, aspartate 103, tryptophan 141, and alanine 169.

Belongs to the class I-like SAM-binding methyltransferase superfamily. EFM7 family.

It localises to the cytoplasm. In terms of biological role, S-adenosyl-L-methionine-dependent protein methyltransferase that trimethylates the N-terminal glycine 'Gly-2' of elongation factor 1-alpha, before also catalyzing the mono- and dimethylation of 'Lys-3'. This Gibberella zeae (strain ATCC MYA-4620 / CBS 123657 / FGSC 9075 / NRRL 31084 / PH-1) (Wheat head blight fungus) protein is Protein N-terminal and lysine N-methyltransferase EFM7.